Here is a 414-residue protein sequence, read N- to C-terminus: Serine hydroxymethyltransferase (414 aa).

(6S)-5,6,7,8-tetrahydrofolate is bound by residues L117 and 121 to 123 (GHL). K226 bears the N6-(pyridoxal phosphate)lysine mark. 349–351 (SPF) serves as a coordination point for (6S)-5,6,7,8-tetrahydrofolate.

Belongs to the SHMT family. In terms of assembly, homodimer. The cofactor is pyridoxal 5'-phosphate.

It localises to the cytoplasm. It catalyses the reaction (6R)-5,10-methylene-5,6,7,8-tetrahydrofolate + glycine + H2O = (6S)-5,6,7,8-tetrahydrofolate + L-serine. Its pathway is one-carbon metabolism; tetrahydrofolate interconversion. It participates in amino-acid biosynthesis; glycine biosynthesis; glycine from L-serine: step 1/1. Its function is as follows. Catalyzes the reversible interconversion of serine and glycine with tetrahydrofolate (THF) serving as the one-carbon carrier. Also exhibits THF-independent aldolase activity toward beta-hydroxyamino acids, producing glycine and aldehydes, via a retro-aldol mechanism. The sequence is that of Serine hydroxymethyltransferase from Methanospirillum hungatei JF-1 (strain ATCC 27890 / DSM 864 / NBRC 100397 / JF-1).